A 122-amino-acid polypeptide reads, in one-letter code: Large ribosomal subunit protein bL17 (122 aa).

This sequence belongs to the bacterial ribosomal protein bL17 family. Part of the 50S ribosomal subunit. Contacts protein L32.

The chain is Large ribosomal subunit protein bL17 from Wigglesworthia glossinidia brevipalpis.